Consider the following 353-residue polypeptide: tRNA-cytidine(32) 2-sulfurtransferase (353 aa).

The PP-loop motif motif lies at 49–54 (SGGKDS). The [4Fe-4S] cluster site is built by cysteine 124, cysteine 127, and cysteine 215.

Belongs to the TtcA family. As to quaternary structure, homodimer. Mg(2+) is required as a cofactor. It depends on [4Fe-4S] cluster as a cofactor.

It localises to the cytoplasm. The enzyme catalyses cytidine(32) in tRNA + S-sulfanyl-L-cysteinyl-[cysteine desulfurase] + AH2 + ATP = 2-thiocytidine(32) in tRNA + L-cysteinyl-[cysteine desulfurase] + A + AMP + diphosphate + H(+). The protein operates within tRNA modification. Functionally, catalyzes the ATP-dependent 2-thiolation of cytidine in position 32 of tRNA, to form 2-thiocytidine (s(2)C32). The sulfur atoms are provided by the cysteine/cysteine desulfurase (IscS) system. The chain is tRNA-cytidine(32) 2-sulfurtransferase from Sodalis glossinidius (strain morsitans).